Consider the following 472-residue polypeptide: Methanethiol oxidase (472 aa).

Ala2 carries the post-translational modification N-acetylalanine. Ser111 and Ser467 each carry phosphoserine.

Belongs to the selenium-binding protein family. As to quaternary structure, interacts with USP33. Post-translationally, the N-terminus is blocked. Highly expressed in liver, kidney and, to a lesser extent, lung.

It is found in the nucleus. The protein localises to the cytoplasm. It localises to the cytosol. The protein resides in the membrane. It catalyses the reaction methanethiol + O2 + H2O = hydrogen sulfide + formaldehyde + H2O2 + H(+). Its pathway is organosulfur degradation. Catalyzes the oxidation of methanethiol, an organosulfur compound known to be produced in substantial amounts by gut bacteria. Selenium-binding protein which may be involved in the sensing of reactive xenobiotics in the cytoplasm. May be involved in intra-Golgi protein transport. The protein is Methanethiol oxidase (Selenbp1) of Mus musculus (Mouse).